A 168-amino-acid polypeptide reads, in one-letter code: UPF0262 protein BRADO6636 (168 aa).

Belongs to the UPF0262 family.

The polypeptide is UPF0262 protein BRADO6636 (Bradyrhizobium sp. (strain ORS 278)).